We begin with the raw amino-acid sequence, 523 residues long: MSQQVIIFDTTLRDGEQALQASLSAKEKLQIALALERMGVDVMEVGFPVSSPGDFESVQTIARTIKNSRVCALARCVEKDIDVAAQALKVADAFRIHTFIATSPMHIATKLRSTLDEVIERAVYMVKRARNYTDDVEFSCEDAGRTPVDDLARVVEAAINAGARTINIPDTVGYTMPFEFAGIISGLYERVPNIDKAIISVHTHDDLGIAVGNSLAAVHAGARQVEGAMNGIGERAGNCALEEVIMAIKVRKDIMNVHTNINHHEIWRTSQTVSQICNMPIPANKAIVGSGAFAHSSGIHQDGVLKNRENYEIMTPESIGLNQIQLNLTSRSGRAAVKHRMEEMGYKDTDYNMDHLYDAFLKLADKKGQVFDYDLEALAFINKQQEEPEHFRLDYFSVQSGSSDIATASVKLACGEEIKAEAANGNGPVDAIYQAINRLTGYDVELVKYDLNAKGQGKDALGQVDIVVNHHGRRFHGVGLATDIVESSAKAMVHVLNNIWRAAEVEKELQRKAQNKENNKETV.

Positions 5–267 (VIIFDTTLRD…HTNINHHEIW (263 aa)) constitute a Pyruvate carboxyltransferase domain. 4 residues coordinate Mn(2+): D14, H202, H204, and N238. The tract at residues 392–523 (RLDYFSVQSG…QNKENNKETV (132 aa)) is regulatory domain.

It belongs to the alpha-IPM synthase/homocitrate synthase family. LeuA type 1 subfamily. As to quaternary structure, homodimer. It depends on Mn(2+) as a cofactor.

It localises to the cytoplasm. It catalyses the reaction 3-methyl-2-oxobutanoate + acetyl-CoA + H2O = (2S)-2-isopropylmalate + CoA + H(+). The protein operates within amino-acid biosynthesis; L-leucine biosynthesis; L-leucine from 3-methyl-2-oxobutanoate: step 1/4. Its function is as follows. Catalyzes the condensation of the acetyl group of acetyl-CoA with 3-methyl-2-oxobutanoate (2-ketoisovalerate) to form 3-carboxy-3-hydroxy-4-methylpentanoate (2-isopropylmalate). The polypeptide is 2-isopropylmalate synthase (Salmonella agona (strain SL483)).